The following is a 365-amino-acid chain: 1-acyl-sn-glycerol-3-phosphate acyltransferase epsilon (365 aa).

A helical membrane pass occupies residues 15–35 (LLPSVLLLGSAPTYLLAWTLW). Positions 93 to 98 (HQSTVD) match the HXXXXD motif motif. A helical membrane pass occupies residues 345–365 (LYMGTWLYGTLLGCLWFVIKA).

Belongs to the 1-acyl-sn-glycerol-3-phosphate acyltransferase family. Widely expressed.

The protein localises to the endoplasmic reticulum membrane. It is found in the nucleus envelope. The protein resides in the mitochondrion. It carries out the reaction a 1-acyl-sn-glycero-3-phosphate + an acyl-CoA = a 1,2-diacyl-sn-glycero-3-phosphate + CoA. It catalyses the reaction 1-(9Z-octadecenoyl)-sn-glycero-3-phosphate + tetradecanoyl-CoA = 1-(9Z)-octadecenoyl-2-tetradecanoyl-sn-glycero-3-phosphate + CoA. The enzyme catalyses pentadecanoyl-CoA + 1-(9Z-octadecenoyl)-sn-glycero-3-phosphate = 1-(9Z)-octadecenoyl-2-pentadecanoyl-sn-glycero-3-phosphate + CoA. The catalysed reaction is 1-(9Z-octadecenoyl)-sn-glycero-3-phosphate + octadecanoyl-CoA = 1-(9Z-octadecenoyl)-2-octadecanoyl-sn-glycero-3-phosphate + CoA. It carries out the reaction nonadecanoyl-CoA + 1-(9Z-octadecenoyl)-sn-glycero-3-phosphate = 1-(9Z)-octadecenoyl-2-nonadecanoyl-sn-glycero-3-phosphate + CoA. It catalyses the reaction 1-(9Z-octadecenoyl)-sn-glycero-3-phosphoethanolamine + (9Z)-octadecenoyl-CoA = 1,2-di-(9Z-octadecenoyl)-sn-glycero-3-phosphoethanolamine + CoA. The enzyme catalyses 1-(9Z-octadecenoyl)-sn-glycero-3-phosphocholine + (9Z)-octadecenoyl-CoA = 1,2-di-(9Z-octadecenoyl)-sn-glycero-3-phosphocholine + CoA. The catalysed reaction is 1-(9Z-octadecenoyl)-sn-glycero-3-phospho-(1D-myo-inositol) + (5Z,8Z,11Z,14Z)-eicosatetraenoyl-CoA = 1-(9Z-octadecenoyl)-2-(5Z,8Z,11Z,14Z-eicosatetraenoyl)-sn-glycero-3-phospho-1D-myo-inositol + CoA. It carries out the reaction 1-(9Z-octadecenoyl)-sn-glycero-3-phospho-L-serine + (9Z)-octadecenoyl-CoA = 1,2-di-(9Z)-octadecenoyl-sn-glycero-3-phospho-L-serine + CoA. It catalyses the reaction 1-(9Z-octadecenoyl)-sn-glycero-3-phospho-L-serine + (5Z,8Z,11Z,14Z)-eicosatetraenoyl-CoA = 1-(9Z-octadecenoyl)-2-(5Z,8Z,11Z,14Z-eicosatetraenoyl)-sn-glycero-3-phospho-L-serine + CoA. The enzyme catalyses 1-hexadecanoyl-sn-glycero-3-phosphate + (9Z)-octadecenoyl-CoA = 1-hexadecanoyl-2-(9Z-octadecenoyl)-sn-glycero-3-phosphate + CoA. The catalysed reaction is 1-heptadecanoyl-sn-glycero-3-phosphate + (9Z)-octadecenoyl-CoA = 1-heptadecanoyl-2-(9Z)-octadecenoyl-sn-glycero-3-phosphate + CoA. It carries out the reaction 1-(5Z,8Z,11Z,14Z-eicosatetraenoyl)-sn-glycero-3-phosphate + (9Z)-octadecenoyl-CoA = 1-(5Z,8Z,11Z,14Z)-eicosatetraenoyl-2-(9Z)-octadecenoyl-sn-glycero-3-phosphate + CoA. It catalyses the reaction 1-octadecanoyl-sn-glycero-3-phosphate + (9Z)-octadecenoyl-CoA = 1-octadecanoyl-2-(9Z-octadecenoyl)-sn-glycero-3-phosphate + CoA. The enzyme catalyses 1-(9Z-octadecenoyl)-sn-glycero-3-phosphate + (5Z,8Z,11Z,14Z)-eicosatetraenoyl-CoA = 1-(9Z)-octadecenoyl-2-(5Z,8Z,11Z,14Z)-eicosatetraenoyl-sn-glycero-3-phosphate + CoA. The catalysed reaction is heptadecanoyl-CoA + 1-(9Z-octadecenoyl)-sn-glycero-3-phosphate = 1-(9Z)-octadecenoyl-2-heptadecanoyl-sn-glycero-3-phosphate + CoA. It carries out the reaction 1-(9Z-octadecenoyl)-sn-glycero-3-phosphocholine + (5Z,8Z,11Z,14Z)-eicosatetraenoyl-CoA = 1-(9Z)-octadecenoyl-2-(5Z,8Z,11Z,14Z)-icosatetraenoyl-sn-glycero-3-phosphocholine + CoA. It catalyses the reaction 1-(9Z-octadecenoyl)-sn-glycero-3-phosphate + (9Z)-octadecenoyl-CoA = 1,2-di-(9Z-octadecenoyl)-sn-glycero-3-phosphate + CoA. The enzyme catalyses 1-(9Z-octadecenoyl)-sn-glycero-3-phosphate + hexadecanoyl-CoA = 1-hexadecanoyl-2-(9Z-octadecenoyl)-sn-glycero-3-phosphate + CoA. It participates in phospholipid metabolism; CDP-diacylglycerol biosynthesis; CDP-diacylglycerol from sn-glycerol 3-phosphate: step 2/3. In terms of biological role, converts 1-acyl-sn-glycerol-3-phosphate (lysophosphatidic acid or LPA) into 1,2-diacyl-sn-glycerol-3-phosphate (phosphatidic acid or PA) by incorporating an acyl moiety at the sn-2 position of the glycerol backbone. Acts on LPA containing saturated or unsaturated fatty acids C15:0-C20:4 at the sn-1 position using C18:1-CoA as the acyl donor. Also acts on lysophosphatidylethanolamine using oleoyl-CoA, but not arachidonoyl-CoA, and lysophosphatidylinositol using arachidonoyl-CoA, but not oleoyl-CoA. Activity toward lysophosphatidylglycerol not detectable. The polypeptide is 1-acyl-sn-glycerol-3-phosphate acyltransferase epsilon (Agpat5) (Mus musculus (Mouse)).